We begin with the raw amino-acid sequence, 245 residues long: Complement C1q subcomponent subunit C (245 aa).

The first 28 residues, 1–28 (MVVGTSCQPQHGLYLLLLLLALPLRSQA), serve as a signal peptide directing secretion. In terms of domain architecture, Collagen-like spans 31–112 (GCYGIPGMPG…GPPGEPGEEG (82 aa)). 5 positions are modified to 4-hydroxyproline: proline 36, proline 39, proline 42, proline 45, and proline 63. Residues 42 to 119 (PGTPGKDGHD…EEGRYKQKHQ (78 aa)) form a disordered region. A 5-hydroxylysine modification is found at lysine 75. Residue lysine 75 is glycosylated (O-linked (Gal...) hydroxylysine). A 4-hydroxyproline mark is found at proline 81, proline 96, proline 99, and proline 105. The span at 98–107 (DPGPRGPPGE) shows a compositional bias: pro residues. Residues 115–245 (KQKHQSVFTV…VFSGFLLFPD (131 aa)) form the C1q domain. Cysteine 179 and cysteine 193 are oxidised to a cystine.

In terms of assembly, core component of the complement C1 complex, a calcium-dependent complex composed of 1 molecule of the C1Q subcomplex, 2 molecules of C1R and 2 molecules of C1S. The C1Q subcomplex is composed 18 subunits: 3 chains of C1QA, C1QB, and C1QC trimerize to form 6 collagen-like triple helices connected to six globular ligand-recognition modules (C1q domain). Post-translationally, O-linked glycans consist of Glc-Gal disaccharides bound to the oxygen atom of post-translationally added hydroxyl groups.

It localises to the secreted. The protein resides in the cell surface. With respect to regulation, the C1Q subcomplex is inhibited by sulfated molecules, such as triterpenoid sulfates, heparan sulfate, or chondroitin sulfates. Its function is as follows. Core component of the complement C1 complex, a multiprotein complex that initiates the classical pathway of the complement system, a cascade of proteins that leads to phagocytosis and breakdown of pathogens and signaling that strengthens the adaptive immune system. The classical complement pathway is initiated by the C1Q subcomplex of the C1 complex, which specifically binds IgG or IgM immunoglobulins complexed with antigens, forming antigen-antibody complexes on the surface of pathogens: C1QA, together with C1QB and C1QC, specifically recognizes and binds the Fc regions of IgG or IgM via its C1q domain. Immunoglobulin-binding activates the proenzyme C1R, which cleaves C1S, initiating the proteolytic cascade of the complement system. The C1Q subcomplex is activated by a hexamer of IgG complexed with antigens, while it is activated by a pentameric IgM. The C1Q subcomplex also recognizes and binds phosphatidylserine exposed on the surface of cells undergoing programmed cell death, possibly promoting activation of the complement system. The chain is Complement C1q subcomponent subunit C from Rattus norvegicus (Rat).